Here is a 72-residue protein sequence, read N- to C-terminus: Toxin Acra II-1 (72 aa).

The LCN-type CS-alpha/beta domain maps to 3–67 (VPGNYPLNTY…VWNAAKNYCK (65 aa)). Cystine bridges form between cysteine 18–cysteine 41, cysteine 27–cysteine 46, and cysteine 31–cysteine 48.

This sequence belongs to the long (3 C-C) scorpion toxin superfamily. Sodium channel inhibitor family. Beta subfamily. Expressed by the venom gland.

The protein resides in the secreted. Functionally, binds to sodium channels (Nav) and affects the channel activation process. The chain is Toxin Acra II-1 from Androctonus crassicauda (Arabian fat-tailed scorpion).